Reading from the N-terminus, the 293-residue chain is Urease accessory protein UreD 2 (293 aa).

Belongs to the UreD family. As to quaternary structure, ureD, UreF and UreG form a complex that acts as a GTP-hydrolysis-dependent molecular chaperone, activating the urease apoprotein by helping to assemble the nickel containing metallocenter of UreC. The UreE protein probably delivers the nickel.

Its subcellular location is the cytoplasm. Required for maturation of urease via the functional incorporation of the urease nickel metallocenter. This chain is Urease accessory protein UreD 2, found in Streptomyces griseus subsp. griseus (strain JCM 4626 / CBS 651.72 / NBRC 13350 / KCC S-0626 / ISP 5235).